The chain runs to 311 residues: Olfactory receptor 2A5 (311 aa).

Residues Met1–Met24 lie on the Extracellular side of the membrane. Residue Asn4 is glycosylated (N-linked (GlcNAc...) asparagine). Residues Leu25 to Ile48 form a helical membrane-spanning segment. The Cytoplasmic portion of the chain corresponds to Trp49–Thr56. A helical transmembrane segment spans residues Pro57–Pro78. Over Lys79–Gln100 the chain is Extracellular. Residues Cys97 and Cys189 are joined by a disulfide bond. The helical transmembrane segment at Thr101–Tyr120 threads the bilayer. Over Asp121 to Gly139 the chain is Cytoplasmic. The helical transmembrane segment at Val140 to Val158 threads the bilayer. Over His159–Gln196 the chain is Extracellular. The helical transmembrane segment at Val197–Ser219 threads the bilayer. The Cytoplasmic segment spans residues Arg220 to Lys236. The helical transmembrane segment at Ala237 to Tyr259 threads the bilayer. Topologically, residues Met260–Lys272 are extracellular. The chain crosses the membrane as a helical span at residues Val273 to Leu292. The Cytoplasmic segment spans residues Arg293–Lys311.

The protein belongs to the G-protein coupled receptor 1 family.

It is found in the cell membrane. Odorant receptor. The protein is Olfactory receptor 2A5 (OR2A5) of Homo sapiens (Human).